The chain runs to 458 residues: Tyrosine phenol-lyase (458 aa).

K258 is subject to N6-(pyridoxal phosphate)lysine.

The protein belongs to the beta-eliminating lyase family. As to quaternary structure, homotetramer. Pyridoxal 5'-phosphate is required as a cofactor.

It carries out the reaction L-tyrosine + H2O = phenol + pyruvate + NH4(+). The protein is Tyrosine phenol-lyase (tpl) of Symbiobacterium thermophilum (strain DSM 24528 / JCM 14929 / IAM 14863 / T).